A 452-amino-acid chain; its full sequence is Cysteine--tRNA ligase (452 aa).

C27 serves as a coordination point for Zn(2+). The 'HIGH' region motif lies at 29–39 (PTVQDHFHIGH). D207, H232, and E236 together coordinate Zn(2+). A 'KMSKS' region motif is present at residues 265 to 269 (KMSKS). K268 contributes to the ATP binding site.

The protein belongs to the class-I aminoacyl-tRNA synthetase family. The cofactor is Zn(2+).

The protein localises to the cytoplasm. The enzyme catalyses tRNA(Cys) + L-cysteine + ATP = L-cysteinyl-tRNA(Cys) + AMP + diphosphate. The chain is Cysteine--tRNA ligase from Thermoplasma acidophilum (strain ATCC 25905 / DSM 1728 / JCM 9062 / NBRC 15155 / AMRC-C165).